The sequence spans 729 residues: Beta-galactosidase 4 (729 aa).

Positions 1–35 (MAPAPTPAAAAGRRVAVLAAALVAASLAASVGVAN) are cleaved as a signal peptide. Catalysis depends on glutamate 194, which acts as the Proton donor. Residue glutamate 263 is the Nucleophile of the active site.

It belongs to the glycosyl hydrolase 35 family.

The protein localises to the secreted. It localises to the extracellular space. Its subcellular location is the apoplast. The catalysed reaction is Hydrolysis of terminal non-reducing beta-D-galactose residues in beta-D-galactosides.. The protein is Beta-galactosidase 4 of Oryza sativa subsp. japonica (Rice).